Reading from the N-terminus, the 232-residue chain is Ubiquinone biosynthesis O-methyltransferase (232 aa).

4 residues coordinate S-adenosyl-L-methionine: R36, G55, D76, and L120.

Belongs to the methyltransferase superfamily. UbiG/COQ3 family.

It carries out the reaction a 3-demethylubiquinol + S-adenosyl-L-methionine = a ubiquinol + S-adenosyl-L-homocysteine + H(+). The enzyme catalyses a 3-(all-trans-polyprenyl)benzene-1,2-diol + S-adenosyl-L-methionine = a 2-methoxy-6-(all-trans-polyprenyl)phenol + S-adenosyl-L-homocysteine + H(+). Its pathway is cofactor biosynthesis; ubiquinone biosynthesis. O-methyltransferase that catalyzes the 2 O-methylation steps in the ubiquinone biosynthetic pathway. The chain is Ubiquinone biosynthesis O-methyltransferase from Pseudomonas savastanoi pv. phaseolicola (strain 1448A / Race 6) (Pseudomonas syringae pv. phaseolicola (strain 1448A / Race 6)).